The chain runs to 145 residues: 3-hydroxyacyl-[acyl-carrier-protein] dehydratase FabZ (145 aa).

Histidine 47 is an active-site residue.

Belongs to the thioester dehydratase family. FabZ subfamily.

The protein localises to the cytoplasm. The enzyme catalyses a (3R)-hydroxyacyl-[ACP] = a (2E)-enoyl-[ACP] + H2O. Involved in unsaturated fatty acids biosynthesis. Catalyzes the dehydration of short chain beta-hydroxyacyl-ACPs and long chain saturated and unsaturated beta-hydroxyacyl-ACPs. The sequence is that of 3-hydroxyacyl-[acyl-carrier-protein] dehydratase FabZ from Vesicomyosocius okutanii subsp. Calyptogena okutanii (strain HA).